The following is a 110-amino-acid chain: UPF0060 membrane protein RPA3838 (110 aa).

4 consecutive transmembrane segments (helical) span residues 4–24 (LLTF…FWAW), 31–51 (PLWL…LTLA), 59–79 (AYAA…WAIE), and 85–105 (QWDV…LFGP).

The protein belongs to the UPF0060 family.

It is found in the cell inner membrane. The sequence is that of UPF0060 membrane protein RPA3838 from Rhodopseudomonas palustris (strain ATCC BAA-98 / CGA009).